A 301-amino-acid chain; its full sequence is Polyamine aminopropyltransferase (301 aa).

The 237-residue stretch at 4 to 240 (WHWLLEWQTP…GLWGFVYGGV (237 aa)) folds into the PABS domain. Gln33 contributes to the S-methyl-5'-thioadenosine binding site. Positions 64 and 89 each coordinate spermidine. Residues Asp109 and 141–142 (DG) contribute to the S-methyl-5'-thioadenosine site. The Proton acceptor role is filled by Asp159.

Belongs to the spermidine/spermine synthase family. Homodimer or homotetramer.

The protein localises to the cytoplasm. It carries out the reaction S-adenosyl 3-(methylsulfanyl)propylamine + putrescine = S-methyl-5'-thioadenosine + spermidine + H(+). It participates in amine and polyamine biosynthesis; spermidine biosynthesis; spermidine from putrescine: step 1/1. Catalyzes the irreversible transfer of a propylamine group from the amino donor S-adenosylmethioninamine (decarboxy-AdoMet) to putrescine (1,4-diaminobutane) to yield spermidine. This Saccharolobus islandicus (strain L.S.2.15 / Lassen #1) (Sulfolobus islandicus) protein is Polyamine aminopropyltransferase.